Reading from the N-terminus, the 154-residue chain is Protein X (154 aa).

The tract at residues 68–117 is mitochondrial targeting sequence; sequence PCALRFTSARRMETTVNAHQILPKVLHKRTLGLSAMSTTDLEAYFKDCLF.

It belongs to the orthohepadnavirus protein X family. May form homodimer. May interact with host CEBPA, CFLAR, CREB1, DDB1, E4F1, HBXIP, HSPD1/HSP60, NFKBIA, POLR2E and SMAD4. Interacts with host SMC5-SMC6 complex and induces its degradation. Interacts with host TRPC4AP; leading to prevent ubiquitination of TRPC4AP. Interacts with host PLSCR1; this interaction promotes ubiquitination and degradation of HBx and impairs HBx-mediated cell proliferation. A fraction may be phosphorylated in insect cells and HepG2 cells, a human hepatoblastoma cell line. Phosphorylated in vitro by host protein kinase C or mitogen-activated protein kinase. N-acetylated in insect cells.

Its subcellular location is the host cytoplasm. The protein resides in the host nucleus. It is found in the host mitochondrion. Functionally, multifunctional protein that plays a role in silencing host antiviral defenses and promoting viral transcription. Does not seem to be essential for HBV infection. May be directly involved in development of cirrhosis and liver cancer (hepatocellular carcinoma). Most of cytosolic activities involve modulation of cytosolic calcium. The effect on apoptosis is controversial depending on the cell types in which the studies have been conducted. May induce apoptosis by localizing in mitochondria and causing loss of mitochondrial membrane potential. May also modulate apoptosis by binding host CFLAR, a key regulator of the death-inducing signaling complex (DISC). Promotes viral transcription by using the host E3 ubiquitin ligase DDB1 to target the SMC5-SMC6 complex to proteasomal degradation. This host complex would otherwise bind to viral episomal DNA, and prevents its transcription. Moderately stimulates transcription of many different viral and cellular transcription elements. Promoters and enhancers stimulated by HBx contain DNA binding sites for NF-kappa-B, AP-1, AP-2, c-EBP, ATF/CREB, or the calcium-activated factor NF-AT. This chain is Protein X, found in Hepatitis B virus genotype E (isolate Chimpanzee/Ch195/1999) (HBV-E).